A 282-amino-acid chain; its full sequence is Probable ribosomal RNA small subunit methyltransferase A (282 aa).

S-adenosyl-L-methionine-binding residues include His24, Leu26, Gly51, Glu72, Asp100, and Asn115.

The protein belongs to the class I-like SAM-binding methyltransferase superfamily. rRNA adenine N(6)-methyltransferase family. RsmA subfamily.

The protein localises to the cytoplasm. Its function is as follows. Specifically dimethylates two adjacent adenosines in the loop of a conserved hairpin near the 3'-end of 16S rRNA in the 30S particle. May play a critical role in biogenesis of 30S subunits. The sequence is that of Probable ribosomal RNA small subunit methyltransferase A from Halobacterium salinarum (strain ATCC 29341 / DSM 671 / R1).